A 249-amino-acid polypeptide reads, in one-letter code: Tryptophan synthase alpha chain (249 aa).

Residues glutamate 43 and aspartate 54 each act as proton acceptor in the active site.

This sequence belongs to the TrpA family. Tetramer of two alpha and two beta chains.

It carries out the reaction (1S,2R)-1-C-(indol-3-yl)glycerol 3-phosphate + L-serine = D-glyceraldehyde 3-phosphate + L-tryptophan + H2O. It functions in the pathway amino-acid biosynthesis; L-tryptophan biosynthesis; L-tryptophan from chorismate: step 5/5. Its function is as follows. The alpha subunit is responsible for the aldol cleavage of indoleglycerol phosphate to indole and glyceraldehyde 3-phosphate. The sequence is that of Tryptophan synthase alpha chain from Campylobacter jejuni subsp. jejuni serotype O:6 (strain 81116 / NCTC 11828).